The primary structure comprises 254 residues: NAD kinase (254 aa).

The Proton acceptor role is filled by D44. NAD(+) contacts are provided by residues 44 to 45 (DG), 114 to 115 (NE), D144, A152, 155 to 160 (TAYNYS), and A179.

The protein belongs to the NAD kinase family. Requires a divalent metal cation as cofactor.

It localises to the cytoplasm. The enzyme catalyses NAD(+) + ATP = ADP + NADP(+) + H(+). Its function is as follows. Involved in the regulation of the intracellular balance of NAD and NADP, and is a key enzyme in the biosynthesis of NADP. Catalyzes specifically the phosphorylation on 2'-hydroxyl of the adenosine moiety of NAD to yield NADP. This Cereibacter sphaeroides (strain ATCC 17025 / ATH 2.4.3) (Rhodobacter sphaeroides) protein is NAD kinase.